The primary structure comprises 633 residues: Probably inactive receptor-like protein kinase At2g46850 (633 aa).

An N-terminal signal peptide occupies residues 1-28; it reads MPPLFLPSSSSALFLLLLLLLTLQTLTS. Residues 29 to 285 are Extracellular-facing; the sequence is ISLSQPQALR…IKKHNGKKLT (257 aa). 3 N-linked (GlcNAc...) asparagine glycosylation sites follow: asparagine 45, asparagine 69, and asparagine 231. The helical transmembrane segment at 286–306 threads the bilayer; sequence VLAGVLAPLFILGSLLALFCL. The Cytoplasmic segment spans residues 307–633; it reads LKRPVTSHKD…SPDSIYLPKT (327 aa). The Protein kinase domain occupies 355–633; the sequence is FQDSQKLTQG…SPDSIYLPKT (279 aa). Residues 361–369 and lysine 384 each bind ATP; that span reads LTQGKTGTI.

The protein belongs to the protein kinase superfamily. Ser/Thr protein kinase family.

Its subcellular location is the membrane. This Arabidopsis thaliana (Mouse-ear cress) protein is Probably inactive receptor-like protein kinase At2g46850.